The primary structure comprises 201 residues: Recombination protein RecR (201 aa).

A C4-type zinc finger spans residues 60–75; the sequence is CRRCGNVDVCDPCTIC. The Toprim domain occupies 83 to 178; sequence RTLVVVADVG…RVTRLAQGVP (96 aa).

It belongs to the RecR family.

May play a role in DNA repair. It seems to be involved in an RecBC-independent recombinational process of DNA repair. It may act with RecF and RecO. The chain is Recombination protein RecR from Xanthobacter autotrophicus (strain ATCC BAA-1158 / Py2).